The following is a 117-amino-acid chain: Holo-[acyl-carrier-protein] synthase (117 aa).

Mg(2+) contacts are provided by D8 and E57.

It belongs to the P-Pant transferase superfamily. AcpS family. Mg(2+) is required as a cofactor.

The protein localises to the cytoplasm. The catalysed reaction is apo-[ACP] + CoA = holo-[ACP] + adenosine 3',5'-bisphosphate + H(+). In terms of biological role, transfers the 4'-phosphopantetheine moiety from coenzyme A to a Ser of acyl-carrier-protein. This chain is Holo-[acyl-carrier-protein] synthase, found in Limosilactobacillus reuteri (Lactobacillus reuteri).